We begin with the raw amino-acid sequence, 301 residues long: Asialoglycoprotein receptor 2 (301 aa).

Positions 1–29 (MEKDFQDIQQLDSEENDHQLIGDEEQGSH) are disordered. At 1–58 (MEKDFQDIQQLDSEENDHQLIGDEEQGSHVQNLRTENPRWGGQPPSRPFPQRLCSKFR) the chain is on the cytoplasmic side. At Ser-13 the chain carries Phosphoserine. Cys-54 is lipidated: S-palmitoyl cysteine. The helical; Signal-anchor for type II membrane protein transmembrane segment at 59-79 (LSLLALAFNILLLVVICVVSS) threads the bilayer. The Extracellular portion of the chain corresponds to 80 to 301 (QSMQLQKEFW…ACERKRDITY (222 aa)). N-linked (GlcNAc...) asparagine glycosylation is found at Asn-97, Asn-119, and Asn-165. One can recognise a C-type lectin domain in the interval 169–295 (CCPVNWVEFG…QQVNRWACER (127 aa)). Disulfide bonds link Cys-170–Cys-181, Cys-198–Cys-293, and Cys-271–Cys-285.

Interacts with LASS2. In terms of tissue distribution, expressed exclusively in hepatic parenchymal cells.

Its subcellular location is the membrane. Functionally, mediates the endocytosis of plasma glycoproteins to which the terminal sialic acid residue on their complex carbohydrate moieties has been removed. The receptor recognizes terminal galactose and N-acetylgalactosamine units. After ligand binding to the receptor, the resulting complex is internalized and transported to a sorting organelle, where receptor and ligand are disassociated. The receptor then returns to the cell membrane surface. In Rattus norvegicus (Rat), this protein is Asialoglycoprotein receptor 2 (Asgr2).